Here is a 351-residue protein sequence, read N- to C-terminus: MKKRVIAVSAIALASVAVLAGCRSHDASGTSGKVKTDLKAAIVTDANGVNDRSFNQSAWEGLQSWGKENNLKKGTGYTYFQSNSASDYTTNYNSAEQQGYKLLFGIGFSLQDATSAAAKNNPKSNFVIVDSVIKDQKNVTSATFADNESAYLAGVAAAKATKTNKIGFIGGMQSDVITRFEKGYVAGAKSVKSDIKVDIQYAGSFSDAAKGKTIAAAMYGSGDDVVYQCAGGVGTGVFSEAKALNSSKNEADKVWVIGVDQDQEYLGKYKSKDGKDSNFVLVSTIKEVGTVVKDIADKTKDGKFPGGTIVTYNLKNGGVDLGLDNATSEIKDAVAKAKTDIIDGKITVPSK.

A signal peptide spans 1–21 (MKKRVIAVSAIALASVAVLAG). C22 carries N-palmitoyl cysteine lipidation. A lipid anchor (S-diacylglycerol cysteine) is attached at C22.

This sequence belongs to the BMP lipoprotein family. In terms of assembly, the complex is composed of two ATP-binding proteins (NupA), two transmembrane proteins (NupB and NupC) and a solute-binding protein (BmpA).

It localises to the cell membrane. Part of an ABC transporter complex involved in the uptake of all common nucleosides. In Lactococcus lactis subsp. cremoris (strain MG1363), this protein is ABC transporter nucleoside-binding protein BmpA.